Here is a 492-residue protein sequence, read N- to C-terminus: MO25-like protein 3 (492 aa).

Residues 442-492 form a disordered region; sequence SRAGIRFGETRNVKGSPRSRSQSPRPPTGPEPSPRTTSYQNVRFPPEDSSR. The segment covering 465 to 474 has biased composition (pro residues); the sequence is PRPPTGPEPS.

This sequence belongs to the Mo25 family.

The chain is MO25-like protein 3 from Caenorhabditis briggsae.